The sequence spans 488 residues: 1-aminocyclopropane-1-carboxylate synthase-like protein 1 (488 aa).

Lys-273 is modified (N6-(pyridoxal phosphate)lysine).

It belongs to the class-I pyridoxal-phosphate-dependent aminotransferase family. Homodimer. Expressed in young leaves and flowers. Not expressed in roots.

In Arabidopsis thaliana (Mouse-ear cress), this protein is 1-aminocyclopropane-1-carboxylate synthase-like protein 1 (ACS1).